The chain runs to 239 residues: Probable transcriptional regulatory protein Aave_3203 (239 aa).

The interval 1 to 20 is disordered; sequence MAGHSKWANIQHRKGRQDEK.

This sequence belongs to the TACO1 family.

The protein localises to the cytoplasm. The sequence is that of Probable transcriptional regulatory protein Aave_3203 from Paracidovorax citrulli (strain AAC00-1) (Acidovorax citrulli).